The following is a 189-amino-acid chain: CDP-archaeol synthase (189 aa).

5 consecutive transmembrane segments (helical) span residues 6–26, 71–91, 96–116, 125–145, and 162–184; these read VAIA…AVLA, GVVL…TVGV, IAAA…ASFL, GAAF…ALTA, and VAIF…AFGL.

Belongs to the CDP-archaeol synthase family. Mg(2+) serves as cofactor.

The protein localises to the cell membrane. The enzyme catalyses 2,3-bis-O-(geranylgeranyl)-sn-glycerol 1-phosphate + CTP + H(+) = CDP-2,3-bis-O-(geranylgeranyl)-sn-glycerol + diphosphate. It functions in the pathway membrane lipid metabolism; glycerophospholipid metabolism. Catalyzes the formation of CDP-2,3-bis-(O-geranylgeranyl)-sn-glycerol (CDP-archaeol) from 2,3-bis-(O-geranylgeranyl)-sn-glycerol 1-phosphate (DGGGP) and CTP. This reaction is the third ether-bond-formation step in the biosynthesis of archaeal membrane lipids. This Natronomonas pharaonis (strain ATCC 35678 / DSM 2160 / CIP 103997 / JCM 8858 / NBRC 14720 / NCIMB 2260 / Gabara) (Halobacterium pharaonis) protein is CDP-archaeol synthase.